Here is a 187-residue protein sequence, read N- to C-terminus: Lysozyme C-like protein DDB_G0288143 (187 aa).

The first 23 residues, 1-23 (MKVSNLISTITIASALCLSLTNA), serve as a signal peptide directing secretion. 3 disulfides stabilise this stretch: cysteine 50-cysteine 125, cysteine 74-cysteine 82, and cysteine 78-cysteine 97. Glutamate 55 is an active-site residue. The disordered stretch occupies residues 133-187 (QHGSHSSTSRDSSSSSSRDSTGTGYSSSGSGTSGSGSNSGQTGHFIPGQSGHGLN). Residues 136-175 (SHSSTSRDSSSSSSRDSTGTGYSSSGSGTSGSGSNSGQTG) are compositionally biased toward low complexity.

It belongs to the glycosyl hydrolase 22 family.

The protein is Lysozyme C-like protein DDB_G0288143 of Dictyostelium discoideum (Social amoeba).